We begin with the raw amino-acid sequence, 417 residues long: Gamma-glutamyl phosphate reductase (417 aa).

This sequence belongs to the gamma-glutamyl phosphate reductase family.

Its subcellular location is the cytoplasm. The enzyme catalyses L-glutamate 5-semialdehyde + phosphate + NADP(+) = L-glutamyl 5-phosphate + NADPH + H(+). Its pathway is amino-acid biosynthesis; L-proline biosynthesis; L-glutamate 5-semialdehyde from L-glutamate: step 2/2. Functionally, catalyzes the NADPH-dependent reduction of L-glutamate 5-phosphate into L-glutamate 5-semialdehyde and phosphate. The product spontaneously undergoes cyclization to form 1-pyrroline-5-carboxylate. The protein is Gamma-glutamyl phosphate reductase of Escherichia coli (strain 55989 / EAEC).